A 413-amino-acid chain; its full sequence is Arogenate dehydratase/prephenate dehydratase 6, chloroplastic (413 aa).

A chloroplast-targeting transit peptide spans 1 to 44; it reads MKALSSSSPILGASQPATATALIARSGRSEWQSSCAILTSKVIS. A Prephenate dehydratase domain is found at 117–294; the sequence is RVAYQGVPGA…NVTRFVMLAR (178 aa). An ACT domain is found at 308-399; that stretch reads SIVFAHEKGT…SFLRVLGSYP (92 aa).

In terms of tissue distribution, expressed in roots, leaves, stems, flowers and siliques.

It localises to the plastid. The protein localises to the chloroplast stroma. The catalysed reaction is L-arogenate + H(+) = L-phenylalanine + CO2 + H2O. It catalyses the reaction prephenate + H(+) = 3-phenylpyruvate + CO2 + H2O. The protein operates within amino-acid biosynthesis; L-phenylalanine biosynthesis; L-phenylalanine from L-arogenate: step 1/1. It participates in amino-acid biosynthesis; L-phenylalanine biosynthesis; phenylpyruvate from prephenate: step 1/1. Converts the prephenate produced from the shikimate-chorismate pathway into phenylalanine. Dehydratase that uses arogenate and prephenate as substrates. Utilzes more efficiently arogenate than prephenate. This Arabidopsis thaliana (Mouse-ear cress) protein is Arogenate dehydratase/prephenate dehydratase 6, chloroplastic.